A 568-amino-acid polypeptide reads, in one-letter code: Phosphoprotein (568 aa).

Disordered regions lie at residues 1 to 22 (MDQD…PGGR) and 40 to 320 (PTDI…GIGE). Residues 7–20 (ILKEDSEVERKAPG) are compositionally biased toward basic and acidic residues. The interval 33–41 (DAVLSSEPT) is N0 binding. Residues 50–60 (LHNTINTSQGP) are compositionally biased toward polar residues. The residue at position 68 (S68) is a Phosphoserine; by host. Over residues 83–101 (RSGEESRVSGRTSKPEAEA) the composition is skewed to basic and acidic residues. A Phosphoserine; by host modification is found at S125. The segment covering 150–168 (GIEDENREMAAHPDKRGED) has biased composition (basic and acidic residues). Residues 191–206 (ASNNGRSMEPGSSHSA) show a composition bias toward polar residues. Phosphoserine; by host is present on residues S192, S249, and S257. Residues 344–411 (FESSRDASYV…SFRDIYKRFS (68 aa)) are multimerization. Residues 364–429 (YAEMTFNVCG…LLMSNLSTLH (66 aa)) are a coiled coil. Positions 412-445 (EYQKEQNSLLMSNLSTLHIITDRGGKTDNTDSLT) are l protein binding. S447 and S449 each carry phosphoserine; by host. The interaction with the nucleocapsid (N-RNA) stretch occupies residues 479 to 568 (DLIREDEFRD…VEEDIESLTN (90 aa)).

It belongs to the respirovirus P protein family. Homotetramer. Interacts (via multimerization domain) with polymerase L; this interaction forms the polymerase complex. Interacts (via N-terminus) with N0; this interaction allows P to chaperon N0 before encapsidation and form the N-P complex. Interacts (via C-terminus) with N-RNA template; this interaction positions the polymerase on the template. Phosphorylated by PKC/PRKCZ, and other unknown kinases. Phosphorylation is necessary for viral transcription and replication. The N-terminus contains the majority of phosphorylated sites. Ser-249 is the major site of phosphorylation, but is not necessary for most functions.

It localises to the host cytoplasm. Essential cofactor of the RNA polymerase L that plays a central role in the transcription and replication by forming the polymerase complex with RNA polymerase L and recruiting L to the genomic N-RNA template for RNA synthesis. Also plays a central role in the encapsidation of nascent RNA chains by forming the encapsidation complex with the nucleocapsid protein N (N-P complex). Acts as a chaperone for newly synthesized free N protein, so-called N0, allowing encapsidation of nascent RNA chains during replication. The nucleoprotein protein N prevents excessive phosphorylation of P, which leads to down-regulation of viral transcription/ replication. Participates, together with N, in the formation of viral factories (viroplasms), which are large inclusions in the host cytoplasm where replication takes place. Recruits host PI4KB and remodel the host endoplasmic reticulum membrane to form viral replication factories. This is Phosphoprotein (P/V/C) from Sendai virus (strain 6/94) (SeV).